The primary structure comprises 213 residues: UPF0319 protein HAPS_0727 (213 aa).

Residues 1-21 form the signal peptide; sequence MKLGKIALAMTALIAGTTAFA.

It belongs to the UPF0319 family.

This Glaesserella parasuis serovar 5 (strain SH0165) (Haemophilus parasuis) protein is UPF0319 protein HAPS_0727.